The primary structure comprises 499 residues: Phenylalanine--tRNA ligase alpha subunit (499 aa).

L-phenylalanine is bound by residues Thr-333, 372-374 (QIE), and Tyr-412. Residue Glu-414 coordinates Mg(2+). Residue Phe-436 participates in L-phenylalanine binding.

Belongs to the class-II aminoacyl-tRNA synthetase family. Phe-tRNA synthetase alpha subunit type 2 subfamily. In terms of assembly, tetramer of two alpha and two beta subunits. Mg(2+) is required as a cofactor.

It is found in the cytoplasm. The catalysed reaction is tRNA(Phe) + L-phenylalanine + ATP = L-phenylalanyl-tRNA(Phe) + AMP + diphosphate + H(+). The protein is Phenylalanine--tRNA ligase alpha subunit of Thermoplasma acidophilum (strain ATCC 25905 / DSM 1728 / JCM 9062 / NBRC 15155 / AMRC-C165).